A 303-amino-acid chain; its full sequence is Probable cell division protein WhiA (303 aa).

Positions 272–303 (SIQQVADALEFPITKSGVNHRLRKINKIADDL) form a DNA-binding region, H-T-H motif.

Belongs to the WhiA family.

Its function is as follows. Involved in cell division and chromosome segregation. The chain is Probable cell division protein WhiA from Streptococcus pyogenes serotype M1.